Reading from the N-terminus, the 241-residue chain is Neuroendocrine secretory protein 55 (241 aa).

An N-terminal signal peptide occupies residues 1 to 46; the sequence is MDRRSRPQLGRRARHNYNDLCPPIGRRAATALLWLSCSIALLRALA. The disordered stretch occupies residues 71 to 241; the sequence is AAQVFPEPPE…KRGAIPIRRH (171 aa). Positions 97-125 are enriched in acidic residues; that stretch reads EYQEEEFDYESETESESEIESETEFETES. Over residues 167 to 177 the composition is skewed to low complexity; it reads PDASPSRAPPS. Over residues 182–198 the composition is skewed to basic and acidic residues; sequence ESPRQGEEPEDKDPRDP. The span at 212–221 shows a compositional bias: basic residues; it reads QHRCKPKKPT.

This sequence belongs to the NESP55 family. In terms of processing, binds keratan sulfate chains. Post-translationally, may be proteolytically processed to give rise to a number of active peptides. Highly expressed in adrenal medulla and anterior and posterior pituitary. In the brain, detected in hypothalamus, hippocampus, caudate nucleus, thalamus and, in significantly lower amounts, in the cerebellum.

It is found in the cytoplasmic vesicle. It localises to the secretory vesicle. The protein localises to the secreted. The polypeptide is Neuroendocrine secretory protein 55 (Bos taurus (Bovine)).